The primary structure comprises 585 residues: Glutamate decarboxylase 2 (585 aa).

A disordered region spans residues 1-24 (MASPGSGFWSFGSEDGSGDPENSG). Residues Ser3, Ser6, Ser10, and Ser13 each carry the phosphoserine modification. S-palmitoyl cysteine attachment occurs at residues Cys30 and Cys45. Residue 181-183 (QLS) participates in substrate binding. Lys396 carries the post-translational modification N6-(pyridoxal phosphate)lysine. Arg558 is a binding site for substrate.

The protein belongs to the group II decarboxylase family. As to quaternary structure, homodimer. It depends on pyridoxal 5'-phosphate as a cofactor. In terms of processing, phosphorylated; which does not affect kinetic parameters or subcellular location. Post-translationally, palmitoylated; which is required for presynaptic clustering.

The protein localises to the cytoplasm. It localises to the cytosol. The protein resides in the cytoplasmic vesicle. Its subcellular location is the presynaptic cell membrane. It is found in the golgi apparatus membrane. It catalyses the reaction L-glutamate + H(+) = 4-aminobutanoate + CO2. Its function is as follows. Catalyzes the production of GABA. The polypeptide is Glutamate decarboxylase 2 (GAD2) (Sus scrofa (Pig)).